The following is a 173-amino-acid chain: ATP synthase subunit b (173 aa).

A helical transmembrane segment spans residues 12-34; it reads AFGNLYAIGWSAVNFLVLLALMY.

Belongs to the ATPase B chain family. As to quaternary structure, F-type ATPases have 2 components, F(1) - the catalytic core - and F(0) - the membrane proton channel. F(1) has five subunits: alpha(3), beta(3), gamma(1), delta(1), epsilon(1). F(0) has three main subunits: a(1), b(2) and c(10-14). The alpha and beta chains form an alternating ring which encloses part of the gamma chain. F(1) is attached to F(0) by a central stalk formed by the gamma and epsilon chains, while a peripheral stalk is formed by the delta and b chains.

The protein localises to the cell membrane. In terms of biological role, f(1)F(0) ATP synthase produces ATP from ADP in the presence of a proton or sodium gradient. F-type ATPases consist of two structural domains, F(1) containing the extramembraneous catalytic core and F(0) containing the membrane proton channel, linked together by a central stalk and a peripheral stalk. During catalysis, ATP synthesis in the catalytic domain of F(1) is coupled via a rotary mechanism of the central stalk subunits to proton translocation. Its function is as follows. Component of the F(0) channel, it forms part of the peripheral stalk, linking F(1) to F(0). The protein is ATP synthase subunit b of Syntrophomonas wolfei subsp. wolfei (strain DSM 2245B / Goettingen).